Here is a 442-residue protein sequence, read N- to C-terminus: MSAGDSIQLFPPTTKQAIEASFVPHGKISPLIKRAVEPVGPLFLAHARRQRHGRTFSEDERLEVKNKVQEEVKEESEDEEEDPAMLRADPKEWKQQDHYAVLGLSKYRYKADTEQIKKAHLKKVLKHHPDKKAASGNINDDSFFKCIQKAYEILSDPVRRRQFDSVDENADVEPPESTTKETFFELWTPVFESEARFSKKQPVPSLGTIESTRAEVDNFYNFWYNFDSWRSFEYLDKDIPDDGESRDNKRFQEKKNRSERQKNKARDNARLRNLVDTALASDPRIKLFKEQEKAAKAARKWEREAGAREAAAAAQKKKEEEERRAAEEAAAKASAAAANKKAKEDKKKAQKRDKKVVKNALKDFNYFSATDVPSAEHVDSVLKDVDVIMSKLGEGELGQLAADINAEKAAGAASVQAVFDKFAKMFIERGSMSSADVVFFAQ.

The interval 49 to 84 (RQRHGRTFSEDERLEVKNKVQEEVKEESEDEEEDPA) is disordered. Thr-55 carries the phosphothreonine modification. Positions 55–71 (TFSEDERLEVKNKVQEE) are enriched in basic and acidic residues. Residues Ser-57 and Ser-76 each carry the phosphoserine modification. Positions 72-83 (VKEESEDEEEDP) are enriched in acidic residues. The 71-residue stretch at 97-167 (DHYAVLGLSK…VRRRQFDSVD (71 aa)) folds into the J domain. 2 disordered regions span residues 242 to 270 (DGESRDNKRFQEKKNRSERQKNKARDNAR) and 306 to 331 (GAREAAAAAQKKKEEEERRAAEEAAA). Positions 316 to 330 (KKKEEEERRAAEEAA) are enriched in basic and acidic residues.

In terms of assembly, RAC is a heterodimer of the Hsp70/DnaK-type chaperone ssz1 and the Hsp40/DnaJ-type chaperone zuo1. RAC associates with ribosomes via zuo1.

Its subcellular location is the cytoplasm. In terms of biological role, component of the ribosome-associated complex (RAC), a heterodimeric chaperone complex involved in regulation of accurate translation termination and in folding or maintaining nascent polypeptides in a folding-competent state. RAC stimulates the ATPase activity of the ribosome-associated pool of Hsp70-type chaperones SSB1/SSB2 that bind to the nascent polypeptide chain. This chain is Zuotin (zuo1), found in Schizosaccharomyces pombe (strain 972 / ATCC 24843) (Fission yeast).